The primary structure comprises 63 residues: Large ribosomal subunit protein uL29 (63 aa).

The protein belongs to the universal ribosomal protein uL29 family.

In Flavobacterium johnsoniae (strain ATCC 17061 / DSM 2064 / JCM 8514 / BCRC 14874 / CCUG 350202 / NBRC 14942 / NCIMB 11054 / UW101) (Cytophaga johnsonae), this protein is Large ribosomal subunit protein uL29.